A 60-amino-acid polypeptide reads, in one-letter code: Small ribosomal subunit protein bS21 (60 aa).

The disordered stretch occupies residues 41-60 (PEEKRKRKAIARRRQRSRRR). The segment covering 45–60 (RKRKAIARRRQRSRRR) has biased composition (basic residues).

This sequence belongs to the bacterial ribosomal protein bS21 family.

In Gloeothece citriformis (strain PCC 7424) (Cyanothece sp. (strain PCC 7424)), this protein is Small ribosomal subunit protein bS21.